The following is a 156-amino-acid chain: Small ribosomal subunit protein uS7 (156 aa).

The protein belongs to the universal ribosomal protein uS7 family. As to quaternary structure, part of the 30S ribosomal subunit. Contacts proteins S9 and S11.

One of the primary rRNA binding proteins, it binds directly to 16S rRNA where it nucleates assembly of the head domain of the 30S subunit. Is located at the subunit interface close to the decoding center, probably blocks exit of the E-site tRNA. The sequence is that of Small ribosomal subunit protein uS7 from Alkaliphilus metalliredigens (strain QYMF).